We begin with the raw amino-acid sequence, 96 residues long: Neutrophil defensin 3 (96 aa).

The N-terminal stretch at 1-19 (MRTLVILAAILLVALQAQA) is a signal peptide. The propeptide occupies 20–66 (EPLQARTDEATAAQEQIPTDNPEVVVSLAWDESLAPKDSVPGLRKNM). 3 disulfides stabilise this stretch: C68/C96, C70/C85, and C75/C95.

Its subcellular location is the secreted. Has bacteriostatic activity against Gram-positive bacteria S.aureus and L.monocytogenes and Gram-negative bacterium E.coli and antifungal activity against C.neoformans. This is Neutrophil defensin 3 from Macaca mulatta (Rhesus macaque).